A 395-amino-acid polypeptide reads, in one-letter code: S-adenosylmethionine synthase (395 aa).

Histidine 14 is an ATP binding site. Aspartate 16 lines the Mg(2+) pocket. Glutamate 42 is a K(+) binding site. Residues glutamate 55 and glutamine 98 each contribute to the L-methionine site. Residues 98 to 108 (QSPDIALGVDK) are flexible loop. Residues 175–177 (DGK), 242–243 (RF), aspartate 251, 257–258 (RK), alanine 274, and lysine 278 each bind ATP. Residue aspartate 251 participates in L-methionine binding. Residue lysine 282 participates in L-methionine binding.

Belongs to the AdoMet synthase family. In terms of assembly, homotetramer; dimer of dimers. It depends on Mg(2+) as a cofactor. Requires K(+) as cofactor.

The protein resides in the cytoplasm. The enzyme catalyses L-methionine + ATP + H2O = S-adenosyl-L-methionine + phosphate + diphosphate. Its pathway is amino-acid biosynthesis; S-adenosyl-L-methionine biosynthesis; S-adenosyl-L-methionine from L-methionine: step 1/1. Its function is as follows. Catalyzes the formation of S-adenosylmethionine (AdoMet) from methionine and ATP. The overall synthetic reaction is composed of two sequential steps, AdoMet formation and the subsequent tripolyphosphate hydrolysis which occurs prior to release of AdoMet from the enzyme. The sequence is that of S-adenosylmethionine synthase from Thermosipho africanus (strain TCF52B).